The primary structure comprises 327 residues: Probable cell division protein WhiA (327 aa).

A DNA-binding region (H-T-H motif) is located at residues 275-308 (SLEELGRLADPPMTKDAVAGRIRRLLSMADRKAK).

Belongs to the WhiA family.

Functionally, involved in cell division and chromosome segregation. This Mycobacterium leprae (strain Br4923) protein is Probable cell division protein WhiA.